The primary structure comprises 270 residues: tRNA pseudouridine synthase A (270 aa).

D51 acts as the Nucleophile in catalysis. Y109 lines the substrate pocket.

This sequence belongs to the tRNA pseudouridine synthase TruA family. In terms of assembly, homodimer.

It carries out the reaction uridine(38/39/40) in tRNA = pseudouridine(38/39/40) in tRNA. Formation of pseudouridine at positions 38, 39 and 40 in the anticodon stem and loop of transfer RNAs. This Burkholderia lata (strain ATCC 17760 / DSM 23089 / LMG 22485 / NCIMB 9086 / R18194 / 383) protein is tRNA pseudouridine synthase A.